A 307-amino-acid chain; its full sequence is MINKDIYQALQQLIPNEKIKVDEPLKRYTYTKTGGNADFYITPTKNVEVQAVVKYAYQNEIPVTYLGNGSNIIIREGGIRGIVISLLSLDHIEVSDDAIIAGSGAAIIDVSRVARDYALTGLEFACGIPGSIGGAVYMNAGAYGGEVKDCIDYALCVNEQGSLVKLTTKELELDYRNSIIQKEHLVVLEAAFTLAPGKMTEIQAKMDDLTERRESKQPLEYPSCGSVFQRPPGHFAGKLIQDSNLQGHRIGGVEVSTKHAGFMVNVDNGTATDYENLIHYVQKTVKEKFGIELNREVRIIGEHPKES.

The FAD-binding PCMH-type domain maps to 33-197 (TGGNADFYIT…LEAAFTLAPG (165 aa)). Arg176 is an active-site residue. The active-site Proton donor is Ser226. Residue Glu296 is part of the active site.

This sequence belongs to the MurB family. It depends on FAD as a cofactor.

It localises to the cytoplasm. The catalysed reaction is UDP-N-acetyl-alpha-D-muramate + NADP(+) = UDP-N-acetyl-3-O-(1-carboxyvinyl)-alpha-D-glucosamine + NADPH + H(+). It participates in cell wall biogenesis; peptidoglycan biosynthesis. Its function is as follows. Cell wall formation. The chain is UDP-N-acetylenolpyruvoylglucosamine reductase from Staphylococcus aureus (strain MRSA252).